Consider the following 510-residue polypeptide: UDP-N-acetylmuramate--L-alanine ligase (510 aa).

The segment at Met-1 to Asn-25 is disordered. Gly-140–Thr-146 provides a ligand contact to ATP.

Belongs to the MurCDEF family.

The protein resides in the cytoplasm. It carries out the reaction UDP-N-acetyl-alpha-D-muramate + L-alanine + ATP = UDP-N-acetyl-alpha-D-muramoyl-L-alanine + ADP + phosphate + H(+). Its pathway is cell wall biogenesis; peptidoglycan biosynthesis. Functionally, cell wall formation. In Synechococcus sp. (strain JA-3-3Ab) (Cyanobacteria bacterium Yellowstone A-Prime), this protein is UDP-N-acetylmuramate--L-alanine ligase.